Consider the following 82-residue polypeptide: UPF0213 protein SH2523 (82 aa).

In terms of domain architecture, GIY-YIG spans 2–77; it reads AKHYVYIVKC…KTFSRQQKLK (76 aa).

This sequence belongs to the UPF0213 family.

This chain is UPF0213 protein SH2523, found in Staphylococcus haemolyticus (strain JCSC1435).